The primary structure comprises 384 residues: tRNA-specific 2-thiouridylase MnmA (384 aa).

ATP-binding positions include 9–16 (GMSGGVDS) and Met-35. Residues 95–97 (NPD) are interaction with target base in tRNA. Residue Cys-100 is the Nucleophile of the active site. Cys-100 and Cys-196 are disulfide-bonded. Gly-124 is an ATP binding site. An interaction with tRNA region spans residues 146-148 (KDQ). Catalysis depends on Cys-196, which acts as the Cysteine persulfide intermediate. The tract at residues 308 to 309 (RY) is interaction with tRNA.

It belongs to the MnmA/TRMU family.

It localises to the cytoplasm. It catalyses the reaction S-sulfanyl-L-cysteinyl-[protein] + uridine(34) in tRNA + AH2 + ATP = 2-thiouridine(34) in tRNA + L-cysteinyl-[protein] + A + AMP + diphosphate + H(+). In terms of biological role, catalyzes the 2-thiolation of uridine at the wobble position (U34) of tRNA, leading to the formation of s(2)U34. The chain is tRNA-specific 2-thiouridylase MnmA from Burkholderia vietnamiensis (strain G4 / LMG 22486) (Burkholderia cepacia (strain R1808)).